The sequence spans 116 residues: Non-specific lipid-transfer protein (116 aa).

A signal peptide spans 1 to 25 (MASMVMNVLCVAVACMVFSASYADA). Cystine bridges form between Cys-28-Cys-75, Cys-38-Cys-52, Cys-53-Cys-98, and Cys-73-Cys-112.

This sequence belongs to the plant LTP family.

Plant non-specific lipid-transfer proteins transfer phospholipids as well as galactolipids across membranes. May play a role in wax or cutin deposition in the cell walls of expanding epidermal cells and certain secretory tissues. This is Non-specific lipid-transfer protein from Gerbera hybrida (Daisy).